Here is a 169-residue protein sequence, read N- to C-terminus: Protein HIGH ARSENIC CONTENT 1, mitochondrial (169 aa).

The transit peptide at 1-59 (MYTYSLLNLSHCRRQTRKKRKTDHTEGFLMEETKPKTVEDVETVDVYTAKGFLSTGHRY) directs the protein to the mitochondrion. One can recognise a Rhodanese domain in the interval 60 to 153 (LDVRTNEEFA…WVDAGFAGDK (94 aa)). The active-site Cysteine persulfide intermediate is Cys113.

In terms of tissue distribution, expressed in root hairs, epidermal cells at the surface of the root and in the pericycle within the stele.

It localises to the mitochondrion. It carries out the reaction [glutaredoxin]-dithiol + arsenate + glutathione + H(+) = glutathionyl-S-S-[glutaredoxin] + arsenite + H2O. Inhibited by trobenzenesulphonic acid (TNBS). In terms of biological role, arsenate reductase critical for arsenic tolerance. Reduces arsenate to arsenite in the root, facilitating efflux of arsenic back into the soil to limit both its accumulation in the root and transport to the shoot. Essential for arsenite efflux from the root, but not necessary for arsenate uptake. The polypeptide is Protein HIGH ARSENIC CONTENT 1, mitochondrial (Arabidopsis thaliana (Mouse-ear cress)).